Reading from the N-terminus, the 358-residue chain is Dynein axonemal assembly factor 10 (358 aa).

6 WD repeats span residues 64–106 (EKSK…SPVY), 116–155 (NAIDGVGGLGIGDGAPEIVTGSRDGTVKVWDSRQKDTPVV), 163–206 (ETKR…LRWE), 208–250 (NIRN…PSKG), 258–298 (AHKS…QRSK), and 320–358 (LSTQPISSLDWSPDKQGLCVCSSFDQSVRVLIVTKLNTV).

As to quaternary structure, interacts with PIH1D1; the interaction associates DNAAF10 with the R2TP complex. Interacts with several dynein axonemal assembly factors.

It is found in the dynein axonemal particle. Key assembly factor specifically required for the stability of axonemal dynein heavy chains in cytoplasm. The chain is Dynein axonemal assembly factor 10 (dnaaf10) from Danio rerio (Zebrafish).